A 501-amino-acid polypeptide reads, in one-letter code: METFRTLLAKAALGNGISSTAYDTAWVAKLGQLDDELSDLALNWLCERQLPDGSWGAEFPFCYEDRLLSTLAAMISLTSNKHRRRRAAQVEKGLLALKNLTSGAFEGPQLDIKDATVGFELIAPTLMAEAARLGLAICHEESILGELVGVREQKLRKLGGSKINKHITAAFSVELAGQDGVGMLDVDNLQETNGSVKYSPSASAYFALHVKPGDKRALAYISSIIQAGDGGAPAFYQAEIFEIVWSLWNLSRTDIDLSDPEIVRTYLPYLDHVEQHWVRGRGVGWTGNSTLEDCDTTSVAYDVLSKFGRSPDIGAVLQFEDADWFRTYFHEVGPSISTNVHVLGALKQAGYDKCHPRVRKVLEFIRSSKEPGRFCWRDKWHRSAYYTTAHLICAASNYDDALCSDAIGWILNTQRPDGSWGFFDGQATAEETAYCIQALAHWQRHSGTSLSAQISRAGGWLSQHCEPPYAPLWIAKTLYCSATVVKAAILSALRLVDESNQ.

The protein belongs to the terpene synthase family. As to quaternary structure, monomer. Mg(2+) serves as cofactor.

It carries out the reaction geranylgeranyl diphosphate = tuberculosinyl diphosphate. With respect to regulation, strongly inhibited by 15-aza-dihydrogeranylgeraniol and 5-isopropyl-N,N,N,2-tetramethyl-4-(piperidine-1-carbonyloxy)benzenaminium chloride (Amo-1618). Inhibited by GGPP concentrations higher than 50 uM. Functionally, catalyzes the formation of tuberculosinyl diphosphate from geranylgeranyl diphosphate (GGPP). It could also react with (14R/S)-14,15-oxidoGGPP to generate 3alpha- and 3beta-hydroxytuberculosinyl diphosphate. The sequence is that of Type B diterpene cyclase from Mycobacterium tuberculosis (strain ATCC 25618 / H37Rv).